The following is a 247-amino-acid chain: Adenosylcobinamide-GDP ribazoletransferase (247 aa).

6 helical membrane-spanning segments follow: residues 34–54 (IVMF…IFIL), 59–79 (CGIP…TGGF), 113–133 (GGLA…ELAL), 138–158 (MLAA…LLMY), 171–191 (VFIG…AVIV), and 194–214 (VLLP…AIFI).

It belongs to the CobS family. Mg(2+) is required as a cofactor.

It localises to the cell inner membrane. It catalyses the reaction alpha-ribazole + adenosylcob(III)inamide-GDP = adenosylcob(III)alamin + GMP + H(+). The enzyme catalyses alpha-ribazole 5'-phosphate + adenosylcob(III)inamide-GDP = adenosylcob(III)alamin 5'-phosphate + GMP + H(+). It functions in the pathway cofactor biosynthesis; adenosylcobalamin biosynthesis; adenosylcobalamin from cob(II)yrinate a,c-diamide: step 7/7. In terms of biological role, joins adenosylcobinamide-GDP and alpha-ribazole to generate adenosylcobalamin (Ado-cobalamin). Also synthesizes adenosylcobalamin 5'-phosphate from adenosylcobinamide-GDP and alpha-ribazole 5'-phosphate. The protein is Adenosylcobinamide-GDP ribazoletransferase of Salmonella paratyphi A (strain ATCC 9150 / SARB42).